The chain runs to 842 residues: Elongation factor G, mitochondrial (842 aa).

The transit peptide at 1-58 (MVAIPRVAAARSLARQLARQSLRTTSFASAPVRIAIASTPLARSPSSFRSLSSSTRRS) directs the protein to the mitochondrion. The tr-type G domain maps to 93-398 (VRQRNVGISA…GVCSYLPNPA (306 aa)). Residues 102-109 (AHIDSGKT), 196-200 (DTPGH), and 250-253 (NKMD) contribute to the GTP site. The disordered stretch occupies residues 423–442 (AGEDQEAAAEARKNAAPPVL).

The protein belongs to the TRAFAC class translation factor GTPase superfamily. Classic translation factor GTPase family. EF-G/EF-2 subfamily.

It is found in the mitochondrion. It functions in the pathway protein biosynthesis; polypeptide chain elongation. Functionally, mitochondrial GTPase that catalyzes the GTP-dependent ribosomal translocation step during translation elongation. During this step, the ribosome changes from the pre-translocational (PRE) to the post-translocational (POST) state as the newly formed A-site-bound peptidyl-tRNA and P-site-bound deacylated tRNA move to the P and E sites, respectively. Catalyzes the coordinated movement of the two tRNA molecules, the mRNA and conformational changes in the ribosome. The polypeptide is Elongation factor G, mitochondrial (Mycosarcoma maydis (Corn smut fungus)).